Here is a 362-residue protein sequence, read N- to C-terminus: MLSRSVASAVTPVSSSSLLPNSKPIFCLKTLSGYRSSSFCGGCIRKINHKPLRMTSSNITPRAMATQQLENADQLIDSVETFIFDCDGVIWKGDKLIEGVPETLDMLRAKGKRLVFVTNNSTKSRKQYGKKFETLGLNVNEEEIFASSFAAAAYLQSINFPKDKKVYVIGEEGILKELELAGFQYLGGPDDGKRQIELKPGFLMEHDHDVGAVVVGFDRYFNYYKIQYGTLCIRENPGCLFIATNRDAVTHLTDAQEWAGGGSMVGALVGSTQREPLVVGKPSTFMMDYLADKFGIQKSQICMVGDRLDTDILFGQNGGCKTLLVLSGVTSISMLESPENKIQPDFYTSKISDFLSPKAATV.

The transit peptide at 1 to 54 (MLSRSVASAVTPVSSSSLLPNSKPIFCLKTLSGYRSSSFCGGCIRKINHKPLRM) directs the protein to the chloroplast. The residue at position 55 (Thr55) is an N-acetylthreonine. Glu80 acts as the Nucleophile in catalysis. A Phosphoserine modification is found at Ser356.

Belongs to the HAD-like hydrolase superfamily. CbbY/CbbZ/Gph/YieH family.

It is found in the plastid. The protein localises to the chloroplast. It catalyses the reaction 2-phosphoglycolate + H2O = glycolate + phosphate. Functionally, photorespiratory enzyme that dephosphorylates the 2-phosphoglycolate produced by the RuBisCO oxygenation reaction. This chain is Phosphoglycolate phosphatase 1B, chloroplastic (PGLP1B), found in Arabidopsis thaliana (Mouse-ear cress).